Reading from the N-terminus, the 715-residue chain is Probable GTP diphosphokinase RSH3, chloroplastic (715 aa).

A chloroplast-targeting transit peptide spans 1–64 (MVVATTIALY…LLFSGASVKS (64 aa)). Over residues 65–74 (SSSSSSSHPS) the composition is skewed to low complexity. Positions 65–84 (SSSSSSSHPSVGEELASIRH) are disordered. One can recognise an HD domain in the interval 237-341 (YLQHCVETAM…IKLADRLHNM (105 aa)).

Belongs to the RelA/SpoT family. In terms of tissue distribution, expressed in roots, hypocotyls, shoots, cotyledons, rosette and cauline leaves, stems, petals, sepals, stamens, pistils and siliques.

It localises to the plastid. Its subcellular location is the chloroplast. The catalysed reaction is GTP + ATP = guanosine 3'-diphosphate 5'-triphosphate + AMP. Functionally, possesses ppGpp (guanosine 3'-diphosphate 5'-diphosphate) synthetase activity in vitro and is able to functionally complement E.coli relA mutants. May be involved in a rapid plant ppGpp-mediated response to pathogens and other stresses. The polypeptide is Probable GTP diphosphokinase RSH3, chloroplastic (RSH3) (Arabidopsis thaliana (Mouse-ear cress)).